A 257-amino-acid polypeptide reads, in one-letter code: tRNA pseudouridine synthase A (257 aa).

D53 functions as the Nucleophile in the catalytic mechanism. Y111 serves as a coordination point for substrate.

This sequence belongs to the tRNA pseudouridine synthase TruA family. As to quaternary structure, homodimer.

It catalyses the reaction uridine(38/39/40) in tRNA = pseudouridine(38/39/40) in tRNA. Its function is as follows. Formation of pseudouridine at positions 38, 39 and 40 in the anticodon stem and loop of transfer RNAs. In Xylella fastidiosa (strain M23), this protein is tRNA pseudouridine synthase A.